A 305-amino-acid chain; its full sequence is tRNA-cytidine(32) 2-sulfurtransferase (305 aa).

The interval 1-20 (MTAVLPLPHPLADPAPRDPR) is disordered. The PP-loop motif motif lies at 59–64 (SGGKDS). [4Fe-4S] cluster is bound by residues Cys-134, Cys-137, and Cys-225. A compositionally biased stretch (low complexity) spans 282–293 (DAPPDLAPDPGA). Positions 282-305 (DAPPDLAPDPGAWLTASDATHDSD) are disordered.

It belongs to the TtcA family. In terms of assembly, homodimer. Mg(2+) serves as cofactor. Requires [4Fe-4S] cluster as cofactor.

The protein resides in the cytoplasm. The catalysed reaction is cytidine(32) in tRNA + S-sulfanyl-L-cysteinyl-[cysteine desulfurase] + AH2 + ATP = 2-thiocytidine(32) in tRNA + L-cysteinyl-[cysteine desulfurase] + A + AMP + diphosphate + H(+). It participates in tRNA modification. Its function is as follows. Catalyzes the ATP-dependent 2-thiolation of cytidine in position 32 of tRNA, to form 2-thiocytidine (s(2)C32). The sulfur atoms are provided by the cysteine/cysteine desulfurase (IscS) system. The chain is tRNA-cytidine(32) 2-sulfurtransferase from Xanthomonas oryzae pv. oryzae (strain MAFF 311018).